Here is a 1206-residue protein sequence, read N- to C-terminus: DNA-directed RNA polymerase subunit beta' (1206 aa).

Residues Cys60, Cys62, Cys75, and Cys78 each coordinate Zn(2+). Asp449, Asp451, and Asp453 together coordinate Mg(2+). 4 residues coordinate Zn(2+): Cys822, Cys896, Cys903, and Cys906.

The protein belongs to the RNA polymerase beta' chain family. As to quaternary structure, the RNAP catalytic core consists of 2 alpha, 1 beta, 1 beta' and 1 omega subunit. When a sigma factor is associated with the core the holoenzyme is formed, which can initiate transcription. It depends on Mg(2+) as a cofactor. Zn(2+) serves as cofactor.

It carries out the reaction RNA(n) + a ribonucleoside 5'-triphosphate = RNA(n+1) + diphosphate. Functionally, DNA-dependent RNA polymerase catalyzes the transcription of DNA into RNA using the four ribonucleoside triphosphates as substrates. In Staphylococcus haemolyticus (strain JCSC1435), this protein is DNA-directed RNA polymerase subunit beta'.